A 559-amino-acid chain; its full sequence is Small ribosomal subunit protein bS1 (559 aa).

S1 motif domains lie at glycine 21–glutamate 87, serine 105–arginine 171, glycine 192–lysine 260, glycine 277–lysine 347, glycine 364–lysine 434, and glycine 451–histidine 520.

The protein belongs to the bacterial ribosomal protein bS1 family.

Functionally, binds mRNA; thus facilitating recognition of the initiation point. It is needed to translate mRNA with a short Shine-Dalgarno (SD) purine-rich sequence. The polypeptide is Small ribosomal subunit protein bS1 (rpsA) (Buchnera aphidicola subsp. Schizaphis graminum (strain Sg)).